Here is a 208-residue protein sequence, read N- to C-terminus: Porimin (208 aa).

Residues M1–A26 form the signal peptide. Topologically, residues H27 to T166 are extracellular. Over residues G42–H57 the composition is skewed to polar residues. The disordered stretch occupies residues G42–T125. N46, N50, N64, N68, N83, N96, and N106 each carry an N-linked (GlcNAc...) asparagine glycan. The segment covering E65–M107 has biased composition (polar residues). The segment covering T108 to S122 has biased composition (low complexity). 2 N-linked (GlcNAc...) asparagine glycosylation sites follow: N124 and N138. A helical membrane pass occupies residues G167–C187. The Cytoplasmic segment spans residues K188–I208.

This sequence belongs to the CD164 family. As to expression, ubiquitous. Not expressed in ovary. Expressed in keratinocytes.

It is found in the membrane. Functionally, implicated in oncotic cell death, characterized by cell swelling, organelle swelling, vacuolization and increased membrane permeability. In Homo sapiens (Human), this protein is Porimin (TMEM123).